Here is a 186-residue protein sequence, read N- to C-terminus: Phosphoheptose isomerase (186 aa).

The SIS domain occupies 33-186 (LCECLKKGGK…TLCQIIDEGF (154 aa)). 48 to 50 (NGG) serves as a coordination point for substrate. Residues His-57 and Glu-61 each contribute to the Zn(2+) site. Substrate is bound by residues Glu-61, 90-91 (ND), 116-118 (STS), Ser-121, and Gln-168. Residues Gln-168 and His-176 each contribute to the Zn(2+) site.

The protein belongs to the SIS family. GmhA subfamily. Homotetramer. Zn(2+) is required as a cofactor.

The protein resides in the cytoplasm. It carries out the reaction 2 D-sedoheptulose 7-phosphate = D-glycero-alpha-D-manno-heptose 7-phosphate + D-glycero-beta-D-manno-heptose 7-phosphate. It functions in the pathway carbohydrate biosynthesis; D-glycero-D-manno-heptose 7-phosphate biosynthesis; D-glycero-alpha-D-manno-heptose 7-phosphate and D-glycero-beta-D-manno-heptose 7-phosphate from sedoheptulose 7-phosphate: step 1/1. Catalyzes the isomerization of sedoheptulose 7-phosphate in D-glycero-D-manno-heptose 7-phosphate. This is Phosphoheptose isomerase from Campylobacter jejuni subsp. jejuni serotype O:6 (strain 81116 / NCTC 11828).